A 212-amino-acid chain; its full sequence is ATP-dependent Clp protease proteolytic subunit (212 aa).

The active-site Nucleophile is serine 114. Histidine 139 is a catalytic residue.

The protein belongs to the peptidase S14 family. As to quaternary structure, fourteen ClpP subunits assemble into 2 heptameric rings which stack back to back to give a disk-like structure with a central cavity, resembling the structure of eukaryotic proteasomes.

It localises to the cytoplasm. It catalyses the reaction Hydrolysis of proteins to small peptides in the presence of ATP and magnesium. alpha-casein is the usual test substrate. In the absence of ATP, only oligopeptides shorter than five residues are hydrolyzed (such as succinyl-Leu-Tyr-|-NHMec, and Leu-Tyr-Leu-|-Tyr-Trp, in which cleavage of the -Tyr-|-Leu- and -Tyr-|-Trp bonds also occurs).. In terms of biological role, cleaves peptides in various proteins in a process that requires ATP hydrolysis. Has a chymotrypsin-like activity. Plays a major role in the degradation of misfolded proteins. The chain is ATP-dependent Clp protease proteolytic subunit from Azoarcus sp. (strain BH72).